Reading from the N-terminus, the 778-residue chain is 5-methyltetrahydropteroyltriglutamate--homocysteine methyltransferase (778 aa).

Residues 17–20 (RELK) and Lys-118 each bind 5-methyltetrahydropteroyltri-L-glutamate. L-homocysteine-binding positions include 436-438 (IGS) and Glu-489. Residues 436-438 (IGS) and Glu-489 each bind L-methionine. 5-methyltetrahydropteroyltri-L-glutamate contacts are provided by residues 520 to 521 (RC) and Trp-566. Asp-604 provides a ligand contact to L-homocysteine. Asp-604 contacts L-methionine. Residue Glu-610 participates in 5-methyltetrahydropteroyltri-L-glutamate binding. Zn(2+) is bound by residues His-646, Cys-648, and Glu-670. His-699 acts as the Proton donor in catalysis. Cys-731 contacts Zn(2+).

This sequence belongs to the vitamin-B12 independent methionine synthase family. The cofactor is Zn(2+).

It carries out the reaction 5-methyltetrahydropteroyltri-L-glutamate + L-homocysteine = tetrahydropteroyltri-L-glutamate + L-methionine. It participates in amino-acid biosynthesis; L-methionine biosynthesis via de novo pathway; L-methionine from L-homocysteine (MetE route): step 1/1. Functionally, catalyzes the transfer of a methyl group from 5-methyltetrahydrofolate to homocysteine resulting in methionine formation. The polypeptide is 5-methyltetrahydropteroyltriglutamate--homocysteine methyltransferase (Vibrio vulnificus (strain CMCP6)).